The primary structure comprises 522 residues: Cytochrome bd-I ubiquinol oxidase subunit 1 (522 aa).

At methionine 1 the chain carries N-formylmethionine. The Cytoplasmic segment spans residues 1–22 (MLDIVELSRLQFALTAMYHFLF). Histidine 19 is a binding site for heme b. Residues 23–42 (VPLTLGMAFLLAIMETVYVL) form a helical membrane-spanning segment. Residues 43–94 (SGKQIYKDMTKFWGKLFGINFALGVATGLTMEFQFGTNWSYYSHYVGDIFGA) are Periplasmic-facing. A helical transmembrane segment spans residues 95–114 (PLAIEGLMAFFLESTFVGLF). The Cytoplasmic segment spans residues 115–129 (FFGWDRLGKVQHMCV). Residues 130–149 (TWLVALGSNLSALWILVANG) form a helical membrane-spanning segment. Topologically, residues 150-187 (WMQNPIASDFNFETMRMEMVSFSELVLNPVAQVKFVHT) are periplasmic. Histidine 186 provides a ligand contact to heme b. Residues 188–207 (VASGYVTGAMFILGISAWYM) traverse the membrane as a helical segment. Residues 208–219 (LKGRDFAFAKRS) lie on the Cytoplasmic side of the membrane. Residues 220–239 (FAIAASFGMAAVLSVIVLGD) traverse the membrane as a helical segment. The Periplasmic segment spans residues 240–392 (ESGYEMGDVQ…VAPLYFAFRI (153 aa)). Methionine 393 is a binding site for heme b. A helical transmembrane segment spans residues 393–412 (MVACGFLLLAIIALSFWSVI). Residues 413-470 (RNRIGEKKWLLRAALYGIPLPWIAVEAGWFVAEYGRQPWAIGEVLPTAVANSSLTAGD) are Cytoplasmic-facing. Residues 471-490 (LIFSMVLICGLYTLFLVAEL) form a helical membrane-spanning segment. Topologically, residues 491 to 522 (FLMFKFARLGPSSLKTGRYHFEQSSTTTQPAR) are periplasmic.

This sequence belongs to the cytochrome ubiquinol oxidase subunit 1 family. In terms of assembly, heterodimer of subunits I and II. Heme b is required as a cofactor. Requires heme d cis-diol as cofactor.

Its subcellular location is the cell inner membrane. It carries out the reaction 2 a ubiquinol + O2(in) + 4 H(+)(in) = 2 a ubiquinone + 2 H2O(in) + 4 H(+)(out). The protein operates within energy metabolism; oxidative phosphorylation. Its function is as follows. A terminal oxidase that produces a proton motive force by the vectorial transfer of protons across the inner membrane. It is the component of the aerobic respiratory chain of E.coli that predominates when cells are grown at low aeration. Generates a proton motive force using protons and electrons from opposite sides of the membrane to generate H(2)O, transferring 1 proton/electron. This Escherichia coli O6:H1 (strain CFT073 / ATCC 700928 / UPEC) protein is Cytochrome bd-I ubiquinol oxidase subunit 1 (cydA).